A 223-amino-acid polypeptide reads, in one-letter code: Probable tRNA-splicing endonuclease subunit tsp-1 (223 aa).

The segment at 1 to 55 (MESGSTPPTDKQIRENEQDGTGHQGKLLARPTSTRQQQQQQQQQPSHSVSQSVSQ) is disordered. Low complexity predominate over residues 30-55 (RPTSTRQQQQQQQQQPSHSVSQSVSQ).

It belongs to the SEN15 family. In terms of assembly, tRNA splicing endonuclease is a heterotetramer composed of tsp-2/sen2, tsp-1/sen15, tsp-4/sen34 and tsp-5/sen54. Interacts directly with tsp-4/sen34.

Functionally, non-catalytic subunit of the tRNA-splicing endonuclease complex, a complex responsible for identification and cleavage of the splice sites in pre-tRNA. It cleaves pre-tRNA at the 5' and 3' splice sites to release the intron. The products are an intron and two tRNA half-molecules bearing 2',3' cyclic phosphate and 5'-OH termini. There are no conserved sequences at the splice sites, but the intron is invariably located at the same site in the gene, placing the splice sites an invariant distance from the constant structural features of the tRNA body. This chain is Probable tRNA-splicing endonuclease subunit tsp-1 (tsp-1), found in Neurospora crassa (strain ATCC 24698 / 74-OR23-1A / CBS 708.71 / DSM 1257 / FGSC 987).